A 396-amino-acid polypeptide reads, in one-letter code: Flavohemoprotein (396 aa).

A Globin domain is found at 1–136 (MLDNHTIAIV…LANVFIQRED (136 aa)). His-85 is a binding site for heme b. Residues Tyr-95 and Glu-135 each act as charge relay system in the active site. The tract at residues 147–396 (GGWSGVRPFR…YECFGPHKVV (250 aa)) is reductase. The FAD-binding FR-type domain occupies 150–255 (SGVRPFRIVN…AAPHGDFFLD (106 aa)). FAD-binding positions include Tyr-188 and 204–207 (RQYS). 268–273 (GVGQTP) contacts NADP(+). Residue 389–392 (CFGP) coordinates FAD.

Belongs to the globin family. Two-domain flavohemoproteins subfamily. This sequence in the C-terminal section; belongs to the flavoprotein pyridine nucleotide cytochrome reductase family. Heme b is required as a cofactor. The cofactor is FAD.

The enzyme catalyses 2 nitric oxide + NADPH + 2 O2 = 2 nitrate + NADP(+) + H(+). It carries out the reaction 2 nitric oxide + NADH + 2 O2 = 2 nitrate + NAD(+) + H(+). Its function is as follows. Is involved in NO detoxification in an aerobic process, termed nitric oxide dioxygenase (NOD) reaction that utilizes O(2) and NAD(P)H to convert NO to nitrate, which protects the bacterium from various noxious nitrogen compounds. Therefore, plays a central role in the inducible response to nitrosative stress. This chain is Flavohemoprotein, found in Pectobacterium atrosepticum (strain SCRI 1043 / ATCC BAA-672) (Erwinia carotovora subsp. atroseptica).